A 408-amino-acid polypeptide reads, in one-letter code: Histidine--tRNA ligase (408 aa).

The protein belongs to the class-II aminoacyl-tRNA synthetase family. In terms of assembly, homodimer.

Its subcellular location is the cytoplasm. It carries out the reaction tRNA(His) + L-histidine + ATP = L-histidyl-tRNA(His) + AMP + diphosphate + H(+). The chain is Histidine--tRNA ligase from Campylobacter jejuni subsp. doylei (strain ATCC BAA-1458 / RM4099 / 269.97).